A 511-amino-acid chain; its full sequence is Lysine--tRNA ligase (511 aa).

Positions 403 and 410 each coordinate Mg(2+).

It belongs to the class-II aminoacyl-tRNA synthetase family. In terms of assembly, homodimer. The cofactor is Mg(2+).

The protein localises to the cytoplasm. It catalyses the reaction tRNA(Lys) + L-lysine + ATP = L-lysyl-tRNA(Lys) + AMP + diphosphate. This is Lysine--tRNA ligase from Onion yellows phytoplasma (strain OY-M).